Reading from the N-terminus, the 229-residue chain is Orotate phosphoribosyltransferase (229 aa).

5-phospho-alpha-D-ribose 1-diphosphate contacts are provided by residues Arg-107, Lys-108, Lys-111, His-113, and 133 to 141 (EDLTTAGGS). Thr-137 serves as a coordination point for orotate.

Belongs to the purine/pyrimidine phosphoribosyltransferase family. PyrE subfamily. Homodimer. It depends on Mg(2+) as a cofactor.

The catalysed reaction is orotidine 5'-phosphate + diphosphate = orotate + 5-phospho-alpha-D-ribose 1-diphosphate. It functions in the pathway pyrimidine metabolism; UMP biosynthesis via de novo pathway; UMP from orotate: step 1/2. Catalyzes the transfer of a ribosyl phosphate group from 5-phosphoribose 1-diphosphate to orotate, leading to the formation of orotidine monophosphate (OMP). The sequence is that of Orotate phosphoribosyltransferase from Rhizobium etli (strain CIAT 652).